A 60-amino-acid polypeptide reads, in one-letter code: Toxin TdNa2 (60 aa).

Residues 1–59 form the LCN-type CS-alpha/beta domain; it reads RDAYPADWRGCKPSCPWGSSSWCNEECTSLGGSSGYCAWPACWCYGLPDSVRYYNNKCH. Cystine bridges form between Cys-11–Cys-58, Cys-15–Cys-37, Cys-23–Cys-42, and Cys-27–Cys-44.

The protein belongs to the long (4 C-C) scorpion toxin superfamily. Sodium channel inhibitor family. Beta subfamily. Expressed by the venom gland.

It localises to the secreted. Inhibits the sodium currents (Nav) in an apparent irreversible manner. Produces small depolarization and induces repetitive firing in squid axons. Is specific for arthropods (crickets, triatomides, crabs and squids), but is non-toxic to mice. This is Toxin TdNa2 from Tityus discrepans (Venezuelan scorpion).